The sequence spans 670 residues: Small ribosomal subunit protein mS39 (670 aa).

The N-terminal 13 residues, 1–13, are a transit peptide targeting the mitochondrion; the sequence is MAAPCVRLGSVRC. PPR repeat units lie at residues 129–163, 164–199, 209–239, 240–274, 275–314, 315–351, 352–392, 396–430, 438–472, 473–507, and 556–590; these read VEGV…GTAP, SLET…EVQD, RPRQ…MPER, NAHS…RLTA, DVQT…NVRP, NLLT…NIEP, SLAT…FTLR, DVYF…DNRG, QSTY…LYYP, NSRG…GHSN, and SAGS…HRVP. Positions 187 to 213 are disordered; sequence IQTSEQEQQEVQDQQETEDPKKRPRQY. Acidic residues predominate over residues 193 to 203; it reads EQQEVQDQQET. Positions 648-670 are disordered; it reads EDLQKSHSSSSSSSSSSSDSDRE. The span at 653 to 670 shows a compositional bias: low complexity; the sequence is SHSSSSSSSSSSSDSDRE.

It belongs to the mitochondrion-specific ribosomal protein mS39 family.

The protein localises to the mitochondrion. Mitochondrial protein that may have a role in mitochondrial translation. The sequence is that of Small ribosomal subunit protein mS39 (ptcd3) from Xenopus tropicalis (Western clawed frog).